We begin with the raw amino-acid sequence, 352 residues long: Threonine synthase (352 aa).

Position 59 is an N6-(pyridoxal phosphate)lysine (Lys-59). Pyridoxal 5'-phosphate is bound by residues Asn-85, 185 to 189, and Thr-314; that span reads GNAGN.

Belongs to the threonine synthase family. Pyridoxal 5'-phosphate is required as a cofactor.

The enzyme catalyses O-phospho-L-homoserine + H2O = L-threonine + phosphate. Its pathway is amino-acid biosynthesis; L-threonine biosynthesis; L-threonine from L-aspartate: step 5/5. In terms of biological role, catalyzes the gamma-elimination of phosphate from L-phosphohomoserine and the beta-addition of water to produce L-threonine. In Bacillus subtilis (strain 168), this protein is Threonine synthase (thrC).